We begin with the raw amino-acid sequence, 177 residues long: Translationally-controlled tumor protein homolog (177 aa).

Positions 1–177 (MIIYRDLFSG…IKQGLVVEKC (177 aa)) constitute a TCTP domain.

This sequence belongs to the TCTP family.

Its subcellular location is the cytoplasm. In terms of biological role, involved in calcium binding and microtubule stabilization. In Trichinella pseudospiralis (Parasitic roundworm), this protein is Translationally-controlled tumor protein homolog.